The primary structure comprises 377 residues: Queuine tRNA-ribosyltransferase (377 aa).

The active-site Proton acceptor is the Asp-92. Substrate is bound by residues 92-96, Asp-146, Gln-190, and Gly-217; that span reads DSGGF. The segment at 248 to 254 is RNA binding; that stretch reads GVGRPED. Catalysis depends on Asp-267, which acts as the Nucleophile. An RNA binding; important for wobble base 34 recognition region spans residues 272-276; that stretch reads TRHAR. Zn(2+) contacts are provided by Cys-305, Cys-307, Cys-310, and His-337.

Belongs to the queuine tRNA-ribosyltransferase family. As to quaternary structure, homodimer. Within each dimer, one monomer is responsible for RNA recognition and catalysis, while the other monomer binds to the replacement base PreQ1. Zn(2+) serves as cofactor.

It carries out the reaction 7-aminomethyl-7-carbaguanine + guanosine(34) in tRNA = 7-aminomethyl-7-carbaguanosine(34) in tRNA + guanine. It functions in the pathway tRNA modification; tRNA-queuosine biosynthesis. Catalyzes the base-exchange of a guanine (G) residue with the queuine precursor 7-aminomethyl-7-deazaguanine (PreQ1) at position 34 (anticodon wobble position) in tRNAs with GU(N) anticodons (tRNA-Asp, -Asn, -His and -Tyr). Catalysis occurs through a double-displacement mechanism. The nucleophile active site attacks the C1' of nucleotide 34 to detach the guanine base from the RNA, forming a covalent enzyme-RNA intermediate. The proton acceptor active site deprotonates the incoming PreQ1, allowing a nucleophilic attack on the C1' of the ribose to form the product. After dissociation, two additional enzymatic reactions on the tRNA convert PreQ1 to queuine (Q), resulting in the hypermodified nucleoside queuosine (7-(((4,5-cis-dihydroxy-2-cyclopenten-1-yl)amino)methyl)-7-deazaguanosine). The protein is Queuine tRNA-ribosyltransferase of Xylella fastidiosa (strain Temecula1 / ATCC 700964).